A 523-amino-acid chain; its full sequence is UDP-glucuronosyltransferase 3A1 (523 aa).

An N-terminal signal peptide occupies residues 1–23 (MAVGRKSLILSLLIQHFVLLHGA). Topologically, residues 24–483 (KILTVCFLGG…YSYQQPLYQQ (460 aa)) are extracellular. Residue N125 is glycosylated (N-linked (GlcNAc...) asparagine). Residues 484 to 504 (YLLDVFLFVCVCVIGACYLTV) traverse the membrane as a helical segment. Over 505 to 523 (KLLKMFIQKLCSFRKLKQN) the chain is Cytoplasmic.

The protein belongs to the UDP-glycosyltransferase family.

It localises to the membrane. It carries out the reaction glucuronate acceptor + UDP-alpha-D-glucuronate = acceptor beta-D-glucuronoside + UDP + H(+). UDP-glucuronosyltransferases catalyze phase II biotransformation reactions in which lipophilic substrates are conjugated with glucuronic acid to increase water solubility and enhance excretion. They are of major importance in the conjugation and subsequent elimination of potentially toxic xenobiotics and endogenous compounds. The protein is UDP-glucuronosyltransferase 3A1 (ugt3a1) of Xenopus laevis (African clawed frog).